A 127-amino-acid chain; its full sequence is Odontogenesis-associated phosphoprotein (127 aa).

A signal peptide spans 1–23; it reads MAPGFHFSWLLVSWLVVTTVKGQ.

In terms of tissue distribution, expressed in enamel organs and not expressed in the heart, kidney, or spleen.

The protein localises to the secreted. Its function is as follows. May promote nucleation of hydroxyapatite. The chain is Odontogenesis-associated phosphoprotein from Rattus norvegicus (Rat).